Here is a 502-residue protein sequence, read N- to C-terminus: MCPISTALFVIAAILALIYVFLTWNFSYWKKRGIPTAKSWPFVGSFPSVFTQKRNVVYDIDEIYEQYKNTDSIVGVFQTRIPQLMVTTPEYAHKIYVSDFRSFHDNEMAKFTDSKTDPILANNPFVLTGEAWKERRAEVTPGLSANRVKAAYPVSLRVCKKFVEYIRRQSLMAPAQGLNAKDLCLCYTTEVISDCVLGISAQSFTDNPTPMVGMTKRVFEQSFGFIFYTVVANLWPPITKFYSVSLFAKDVAAFFYDLMQKCIQVRRESPAAQQRDDFLNYMLQLQEKKGLNAAELTSHTMTFLTDGFETTAQVLTHTLLFLARNPKEQMKLREEIGTAELTFEQISELPFTEACIHETLRIFSPVLAARKVVTEPCELTNKNGVSVKLRPGDVVIIPVNALHHDPQYYEEPQSFKPERFLNINGGAKKYRDQGLFFGFGDGPRICPGMRFSLTQIKAALVEIVRNFDIKVNPKTRKDNEIDDTYFMPALKGGVWLDFVERN.

Residue C446 coordinates heme.

The protein belongs to the cytochrome P450 family. It depends on heme as a cofactor.

Its subcellular location is the endoplasmic reticulum membrane. It is found in the microsome membrane. Its function is as follows. May be involved in the metabolism of insect hormones and in the breakdown of synthetic insecticides. The polypeptide is Probable cytochrome P450 28d1 (Cyp28d1) (Drosophila melanogaster (Fruit fly)).